The chain runs to 183 residues: Ras-related protein Rap-2c (183 aa).

Position 10-17 (10-17 (GSGGVGKS)) interacts with GTP. Positions 32–40 (YDPTIEDFY) match the Effector region motif. GTP is bound by residues 57–61 (DTAGT) and 116–119 (NKVD). S-palmitoyl cysteine attachment occurs at residues Cys-176 and Cys-177. Cys-180 bears the Cysteine methyl ester mark. Residue Cys-180 is the site of S-geranylgeranyl cysteine attachment. Positions 181-183 (VVQ) are cleaved as a propeptide — removed in mature form.

It belongs to the small GTPase superfamily. Ras family. Palmitoylated. Palmitoylation is required for association with recycling endosome membranes and activation of TNIK.

It is found in the cytoplasm. The protein localises to the recycling endosome membrane. It catalyses the reaction GTP + H2O = GDP + phosphate + H(+). Its function is as follows. Small GTP-binding protein which cycles between a GDP-bound inactive and a GTP-bound active form. May play a role in cytoskeletal rearrangements and regulate cell spreading through activation of the effector TNIK. May play a role in SRE-mediated gene transcription. The polypeptide is Ras-related protein Rap-2c (RAP2C) (Bos taurus (Bovine)).